Consider the following 261-residue polypeptide: Indole-3-glycerol phosphate synthase (261 aa).

This sequence belongs to the TrpC family.

It carries out the reaction 1-(2-carboxyphenylamino)-1-deoxy-D-ribulose 5-phosphate + H(+) = (1S,2R)-1-C-(indol-3-yl)glycerol 3-phosphate + CO2 + H2O. Its pathway is amino-acid biosynthesis; L-tryptophan biosynthesis; L-tryptophan from chorismate: step 4/5. In Burkholderia pseudomallei (strain 668), this protein is Indole-3-glycerol phosphate synthase.